The sequence spans 422 residues: E3 ubiquitin-protein ligase CBLL2 (422 aa).

The RING-type zinc finger occupies 54-94 (CDKCDLPIKIYGRIIPCKHAFCYNCANLYDKIGYKICPRCS). The HYB domain stretch occupies residues 93–151 (CSYPVLRIEEHKRGSVFMCSVVQGCKRTYLSQKSLQAHIKRRHKRARKQVASASLEKLR). The C2H2-type zinc finger occupies 109 to 135 (FMCSVVQGCKRTYLSQKSLQAHIKRRH). Disordered regions lie at residues 190–213 (MQQM…PELS) and 378–422 (QTDA…HRPY). Basic and acidic residues predominate over residues 195 to 205 (HEQHNQPHKDL). The span at 393–405 (LPPPPPTWSPPPS) shows a compositional bias: pro residues. Residues 410–422 (GSHHSYQRRHRPY) are compositionally biased toward basic residues.

As to quaternary structure, homodimer.

It localises to the cytoplasm. The catalysed reaction is S-ubiquitinyl-[E2 ubiquitin-conjugating enzyme]-L-cysteine + [acceptor protein]-L-lysine = [E2 ubiquitin-conjugating enzyme]-L-cysteine + N(6)-ubiquitinyl-[acceptor protein]-L-lysine.. The protein operates within protein modification; protein ubiquitination. Its function is as follows. E3 ubiquitin ligase catalyzing the covalent attachment of ubiquitin moieties onto substrate proteins. May operate on tyrosine-phosphorylated SRC substrates. The sequence is that of E3 ubiquitin-protein ligase CBLL2 (CBLL2) from Macaca fascicularis (Crab-eating macaque).